A 185-amino-acid chain; its full sequence is Inner membrane-spanning protein YciB (185 aa).

A run of 5 helical transmembrane segments spans residues 27–47, 53–73, 76–96, 118–138, and 149–169; these read IVLVVATILQIVILKWKYGIV, IMASAVVFFGLLTAYFNEIRY, WKVTIINGLFAIVLLVAQFQF, TLNLGWALFFIICMLVNIYIS, and FKSFGIIGMTVIATIISGVYI.

It belongs to the YciB family.

It localises to the cell inner membrane. Functionally, plays a role in cell envelope biogenesis, maintenance of cell envelope integrity and membrane homeostasis. This Haemophilus influenzae (strain 86-028NP) protein is Inner membrane-spanning protein YciB.